We begin with the raw amino-acid sequence, 170 residues long: MKRLVFISFVALSMTAGSAMAQQGDVKFFGNVSATTCNLTPQISGTVGDTIQLGTVAPSGTGSEIPFALKASSNVGGCASLSTKTADITWSGQLTEKGFANQGGVANDSYVALKTVNGKTQGQEVKASNSTVSFDASKATTEGFKFTAQLKGGQTPGDFQGAAAYAVTYK.

The N-terminal stretch at 1–21 is a signal peptide; that stretch reads MKRLVFISFVALSMTAGSAMA. C37 and C78 are disulfide-bonded.

The protein belongs to the fimbrial protein family.

The protein resides in the fimbrium. In terms of biological role, fimbriae (also called pili), polar filaments radiating from the surface of the bacterium to a length of 0.5-1.5 micrometers and numbering 100-300 per cell, enable bacteria to colonize the epithelium of specific host organs. The sequence is that of F107 fimbrial protein (fedA) from Escherichia coli.